The following is a 368-amino-acid chain: Acetyl-coenzyme A carboxylase carboxyl transferase subunit alpha (368 aa).

In terms of domain architecture, CoA carboxyltransferase C-terminal spans 44–294 (EIDNKLQEIY…RKSIEKNLNE (251 aa)).

The protein belongs to the AccA family. Acetyl-CoA carboxylase is a heterohexamer composed of biotin carboxyl carrier protein (AccB), biotin carboxylase (AccC) and two subunits each of ACCase subunit alpha (AccA) and ACCase subunit beta (AccD).

It is found in the cytoplasm. It catalyses the reaction N(6)-carboxybiotinyl-L-lysyl-[protein] + acetyl-CoA = N(6)-biotinyl-L-lysyl-[protein] + malonyl-CoA. It participates in lipid metabolism; malonyl-CoA biosynthesis; malonyl-CoA from acetyl-CoA: step 1/1. Functionally, component of the acetyl coenzyme A carboxylase (ACC) complex. First, biotin carboxylase catalyzes the carboxylation of biotin on its carrier protein (BCCP) and then the CO(2) group is transferred by the carboxyltransferase to acetyl-CoA to form malonyl-CoA. In Pelagibacter ubique (strain HTCC1062), this protein is Acetyl-coenzyme A carboxylase carboxyl transferase subunit alpha.